We begin with the raw amino-acid sequence, 333 residues long: Probable cytosolic iron-sulfur protein assembly protein ciao1 (333 aa).

WD repeat units lie at residues 14–53 (HPDSRCWFLAWNPSGTLLASCGGDRTIRIWGKDGDNWVCK), 59–98 (GHQRTVRKVSWSPCGNYLASASFDATTCIWMKKKEEFECI), 103–142 (GHENEVKSVAWAPSGSLLATCSRDKSVWVWEVDEEEEYEC), 148–187 (SHTQDVKHVVWHPNQELLASASYDDSVKLYREEEDDWVCC), 192–231 (GHTSTVWSLAFDQTGEQLATCSDDKTVRIWRQLGTGEQGS), 246–285 (YHTRTVYDVNWNHLTGAIATACGDDAVRIFEEDPGSDPLQ), and 297–333 (AHTQDVNCVTWHPKEPNLLASCSDDGEMAFWRYQKPE).

It belongs to the WD repeat CIA1 family. In terms of assembly, component of the CIA complex.

In terms of biological role, key component of the cytosolic iron-sulfur protein assembly (CIA) complex, a multiprotein complex that mediates the incorporation of iron-sulfur cluster into extramitochondrial Fe/S proteins. The protein is Probable cytosolic iron-sulfur protein assembly protein ciao1 (ciao1) of Xenopus tropicalis (Western clawed frog).